A 440-amino-acid chain; its full sequence is Glutamate--tRNA ligase 2 (440 aa).

The 'HIGH' region motif lies at 8-18; sequence PSPTGYLHVGN. The short motif at 239–243 is the 'KMSKS' region element; sequence ALSKR. ATP is bound at residue lysine 242.

This sequence belongs to the class-I aminoacyl-tRNA synthetase family. Glutamate--tRNA ligase type 1 subfamily. In terms of assembly, monomer.

It localises to the cytoplasm. It catalyses the reaction tRNA(Glu) + L-glutamate + ATP = L-glutamyl-tRNA(Glu) + AMP + diphosphate. Functionally, catalyzes the attachment of glutamate to tRNA(Glu) in a two-step reaction: glutamate is first activated by ATP to form Glu-AMP and then transferred to the acceptor end of tRNA(Glu). The chain is Glutamate--tRNA ligase 2 from Dinoroseobacter shibae (strain DSM 16493 / NCIMB 14021 / DFL 12).